The primary structure comprises 440 residues: D-serine dehydratase (440 aa).

Lys-116 carries the post-translational modification N6-(pyridoxal phosphate)lysine.

It belongs to the serine/threonine dehydratase family. DsdA subfamily. Monomer. Pyridoxal 5'-phosphate is required as a cofactor.

The catalysed reaction is D-serine = pyruvate + NH4(+). The protein is D-serine dehydratase of Salmonella choleraesuis (strain SC-B67).